The primary structure comprises 153 residues: Aspartate carbamoyltransferase regulatory chain (153 aa).

Residues Cys-109, Cys-114, Cys-138, and Cys-141 each coordinate Zn(2+).

It belongs to the PyrI family. Contains catalytic and regulatory chains. It depends on Zn(2+) as a cofactor.

Its function is as follows. Involved in allosteric regulation of aspartate carbamoyltransferase. The chain is Aspartate carbamoyltransferase regulatory chain from Vibrio parahaemolyticus serotype O3:K6 (strain RIMD 2210633).